Reading from the N-terminus, the 324-residue chain is GTP cyclohydrolase 1 (324 aa).

Disordered regions lie at residues 33-59 (GRNNSVCSTSSTSGTSSLADRQQNQAE) and 79-119 (VPLA…TPGH). The segment covering 40-49 (STSSTSGTSS) has biased composition (low complexity). Composition is skewed to polar residues over residues 50–59 (LADRQQNQAE) and 93–117 (TNGSSPDSDGTQPKTPLTPRTSTTP). Zn(2+) contacts are provided by Cys-214, His-217, and Cys-285.

This sequence belongs to the GTP cyclohydrolase I family. Toroid-shaped homodecamer, composed of two pentamers of five dimers. In terms of tissue distribution, isoform B is expressed almost exclusively in adult heads.

The enzyme catalyses GTP + H2O = 7,8-dihydroneopterin 3'-triphosphate + formate + H(+). Its pathway is cofactor biosynthesis; 7,8-dihydroneopterin triphosphate biosynthesis; 7,8-dihydroneopterin triphosphate from GTP: step 1/1. In terms of biological role, isoform B is required for eye pigment production, Isoform C may be required for normal embryonic development and segment pattern formation. This chain is GTP cyclohydrolase 1 (Pu), found in Drosophila melanogaster (Fruit fly).